The sequence spans 78 residues: U23-theraphotoxin-Cg1a 1 (78 aa).

An N-terminal signal peptide occupies residues Met1–Ala21. The propeptide occupies Ser22 to Arg49. 3 cysteine pairs are disulfide-bonded: Cys50–Cys64, Cys57–Cys69, and Cys63–Cys75.

Belongs to the neurotoxin 10 (Hwtx-1) family. 64 (Jztx-20) subfamily. As to expression, expressed by the venom gland.

The protein resides in the secreted. Its function is as follows. Probable ion channel inhibitor. This chain is U23-theraphotoxin-Cg1a 1, found in Chilobrachys guangxiensis (Chinese earth tiger tarantula).